Here is a 637-residue protein sequence, read N- to C-terminus: MIVFSSLQIRRGVRVLLDNATATINPGQKVGLVGKNGCGKSTLLALLKNEISADGGSYTFPGSWQLAWVNQETPALPQAALEYVIDGDREYRQLEAQLHDANERNDGHAIATIHGKLDAIDAWSIRSRAASLLHGLGFSNEQLERPVSDFSGGWRMRLNLAQALICRSDLLLLDEPTNHLDLDAVIWLEKWLKSYQGTLILISHDRDFLDPIVDKIIHIEQQSMFEYTGNYSSFEVQRATRLAQQQAMYESQQERVAHLQSYIDRFRAKATKAKQAQSRIKMLERMELIAPAHVDNPFRFSFRAPESLPNPLLKMEKVSAGYGDRIILDSIKLNLVPGSRIGLLGRNGAGKSTLIKLLAGELAPVSGEIGLAKGIKLGYFAQHQLEYLRADESPIQHLARLAPQELEQKLRDYLGGFGFQGDKVTEETRRFSGGEKARLVLALIVWQRPNLLLLDEPTNHLDLDMRQALTEALIEFEGALVVVSHDRHLLRSTTDDLYLVHDRKVEPFDGDLEDYQQWLSDVQKQENQTDEAPKENANSAQARKDQKRREAELRAQTQPLRKEIARLEKEMEKLNAQLAQAEEKLGDSELYDQSRKAELTACLQQQASAKSGLEECEMAWLEAQEQLEQMLLEGQSN.

ABC transporter domains are found at residues I2–Q246 and L313–N527. Residues G34–S41 and G345–S352 contribute to the ATP site. The disordered stretch occupies residues Q523–P559. The segment covering A542–L553 has biased composition (basic and acidic residues).

The protein belongs to the ABC transporter superfamily. ABCF family. YheS subfamily.

Functionally, genetic data indicate it may be involved in ribosome assembly or function. This chain is Probable ATP-binding protein YheS (yheS), found in Escherichia coli O157:H7.